The following is a 365-amino-acid chain: UDP-N-acetylglucosamine--N-acetylmuramyl-(pentapeptide) pyrophosphoryl-undecaprenol N-acetylglucosamine transferase (365 aa).

Residues Thr19–Gly21, Asn131, Arg170, Ser201, Ile255, Ala274–Glu279, and Gln300 contribute to the UDP-N-acetyl-alpha-D-glucosamine site.

Belongs to the glycosyltransferase 28 family. MurG subfamily.

The protein localises to the cell inner membrane. The enzyme catalyses di-trans,octa-cis-undecaprenyl diphospho-N-acetyl-alpha-D-muramoyl-L-alanyl-D-glutamyl-meso-2,6-diaminopimeloyl-D-alanyl-D-alanine + UDP-N-acetyl-alpha-D-glucosamine = di-trans,octa-cis-undecaprenyl diphospho-[N-acetyl-alpha-D-glucosaminyl-(1-&gt;4)]-N-acetyl-alpha-D-muramoyl-L-alanyl-D-glutamyl-meso-2,6-diaminopimeloyl-D-alanyl-D-alanine + UDP + H(+). It functions in the pathway cell wall biogenesis; peptidoglycan biosynthesis. Its function is as follows. Cell wall formation. Catalyzes the transfer of a GlcNAc subunit on undecaprenyl-pyrophosphoryl-MurNAc-pentapeptide (lipid intermediate I) to form undecaprenyl-pyrophosphoryl-MurNAc-(pentapeptide)GlcNAc (lipid intermediate II). This chain is UDP-N-acetylglucosamine--N-acetylmuramyl-(pentapeptide) pyrophosphoryl-undecaprenol N-acetylglucosamine transferase, found in Acinetobacter baumannii (strain ACICU).